Consider the following 154-residue polypeptide: 6,7-dimethyl-8-ribityllumazine synthase (154 aa).

5-amino-6-(D-ribitylamino)uracil is bound by residues Phe-23, Ala-57–Glu-59, and Ala-81–Ile-83. Ala-86 to Thr-87 is a (2S)-2-hydroxy-3-oxobutyl phosphate binding site. The Proton donor role is filled by His-89. Phe-114 is a binding site for 5-amino-6-(D-ribitylamino)uracil. Position 128 (Arg-128) interacts with (2S)-2-hydroxy-3-oxobutyl phosphate.

This sequence belongs to the DMRL synthase family.

It catalyses the reaction (2S)-2-hydroxy-3-oxobutyl phosphate + 5-amino-6-(D-ribitylamino)uracil = 6,7-dimethyl-8-(1-D-ribityl)lumazine + phosphate + 2 H2O + H(+). Its pathway is cofactor biosynthesis; riboflavin biosynthesis; riboflavin from 2-hydroxy-3-oxobutyl phosphate and 5-amino-6-(D-ribitylamino)uracil: step 1/2. Its function is as follows. Catalyzes the formation of 6,7-dimethyl-8-ribityllumazine by condensation of 5-amino-6-(D-ribitylamino)uracil with 3,4-dihydroxy-2-butanone 4-phosphate. This is the penultimate step in the biosynthesis of riboflavin. In Desulforamulus reducens (strain ATCC BAA-1160 / DSM 100696 / MI-1) (Desulfotomaculum reducens), this protein is 6,7-dimethyl-8-ribityllumazine synthase.